The chain runs to 718 residues: Methionine--tRNA ligase (718 aa).

The 'HIGH' region motif lies at 27 to 37 (PYANGQIHIGH). Residues cysteine 158, cysteine 161, cysteine 171, and cysteine 174 each contribute to the Zn(2+) site. The 'KMSKS' region signature appears at 348–352 (KMSKS). An ATP-binding site is contributed by lysine 351. One can recognise a tRNA-binding domain in the interval 612 to 718 (DFAKIDLRIA…SGAKPGMRVK (107 aa)).

The protein belongs to the class-I aminoacyl-tRNA synthetase family. MetG type 1 subfamily. As to quaternary structure, homodimer. Requires Zn(2+) as cofactor.

The protein resides in the cytoplasm. The catalysed reaction is tRNA(Met) + L-methionine + ATP = L-methionyl-tRNA(Met) + AMP + diphosphate. Functionally, is required not only for elongation of protein synthesis but also for the initiation of all mRNA translation through initiator tRNA(fMet) aminoacylation. The protein is Methionine--tRNA ligase of Burkholderia thailandensis (strain ATCC 700388 / DSM 13276 / CCUG 48851 / CIP 106301 / E264).